The following is a 218-amino-acid chain: MSIGILGKKLGMSQFFDEQGRAVPVTLIEAGPCRITQLKSSDTDGYAAVQIGFGDTREKLINKPAKGHLNKTGETLLRHLREYRVDGLDGFELGGSITVGDFEAGQKVDVSGDTIGRGFSGYQKRHGFSRGPMTHGSKNHREPGSIGPGTTPGRIYPGKRMAGRYGGKKITTRGLTILKVDSERNLLVVKGSVPGKPGALLNIRPALRVGAKPAKGGQ.

The interval 121-163 (GYQKRHGFSRGPMTHGSKNHREPGSIGPGTTPGRIYPGKRMAG) is disordered.

This sequence belongs to the universal ribosomal protein uL3 family. In terms of assembly, part of the 50S ribosomal subunit. Forms a cluster with proteins L14 and L19.

Functionally, one of the primary rRNA binding proteins, it binds directly near the 3'-end of the 23S rRNA, where it nucleates assembly of the 50S subunit. This chain is Large ribosomal subunit protein uL3, found in Parasynechococcus marenigrum (strain WH8102).